The primary structure comprises 37 residues: MKKRASVRKICQKCRLTRRRGRIRVICSNPRHKKRQG.

It belongs to the bacterial ribosomal protein bL36 family.

The protein localises to the plastid. It is found in the chloroplast. The protein is Large ribosomal subunit protein bL36c of Jasminum nudiflorum (Winter jasmine).